Here is a 147-residue protein sequence, read N- to C-terminus: Cysteine proteinase inhibitor 2 (147 aa).

Positions 1 to 27 (MATMLKVSLVLSLLGFLVIAVVTPSAA) are cleaved as a signal peptide. Positions 87 to 117 (LQFSRVVSAQKQVVAGLKYYLRIEVTQPNGS) constitute a Cystatin domain. Residues 98 to 102 (QVVAG) carry the Secondary area of contact motif. The N-linked (GlcNAc...) asparagine glycan is linked to Asn-115.

This sequence belongs to the cystatin family. Phytocystatin subfamily.

It localises to the secreted. Functionally, specific inhibitor of cysteine proteinases. Probably involved in the regulation of endogenous processes and in defense against pests and pathogens. The protein is Cysteine proteinase inhibitor 2 (CYS2) of Arabidopsis thaliana (Mouse-ear cress).